The sequence spans 225 residues: Probable septum site-determining protein MinC (225 aa).

It belongs to the MinC family. As to quaternary structure, interacts with MinD and FtsZ.

In terms of biological role, cell division inhibitor that blocks the formation of polar Z ring septums. Rapidly oscillates between the poles of the cell to destabilize FtsZ filaments that have formed before they mature into polar Z rings. Prevents FtsZ polymerization. The chain is Probable septum site-determining protein MinC from Listeria monocytogenes serotype 4a (strain HCC23).